The chain runs to 903 residues: Immunoglobulin superfamily member 22 (903 aa).

Ig-like domains are found at residues proline 67–threonine 158, glutamate 232–threonine 322, proline 418–threonine 508, and proline 606–serine 696. Fibronectin type-III domains follow at residues phenylalanine 703–proline 798 and leucine 804–proline 898.

This Homo sapiens (Human) protein is Immunoglobulin superfamily member 22 (IGSF22).